A 498-amino-acid chain; its full sequence is Protein flp (498 aa).

Transmembrane regions (helical) follow at residues Leu6–Thr26, Phe389–Tyr409, Leu433–Leu453, and Leu471–Leu491.

It localises to the cell membrane. Its precise function is unknown. Has no penicillin-binding activity and is not involved in methicillin resistance. The chain is Protein flp (flp) from Staphylococcus aureus (strain Mu50 / ATCC 700699).